Consider the following 284-residue polypeptide: UPF0294 protein VV1_1880 (284 aa).

It belongs to the UPF0294 family.

Its subcellular location is the cytoplasm. This Vibrio vulnificus (strain CMCP6) protein is UPF0294 protein VV1_1880.